The chain runs to 1470 residues: Transient receptor potential cation channel subfamily M member 2 (1470 aa).

The Cytoplasmic segment spans residues 1 to 725 (MDEAALEPTL…GELSVDNPHW (725 aa)). ADP-D-ribose-binding positions include Y267, R274, 305–308 (GPGT), and R330. Residues 726 to 738 (KVLLCMIFFPLIY) lie within the membrane without spanning it. At 739–808 (TGFLTFRRDE…MSFLKSPQVK (70 aa)) the chain is on the cytoplasmic side. Residues 809–829 (FYWNIASYFGFLWLFAVVLMI) form a helical membrane-spanning segment. The Extracellular segment spans residues 830–836 (DFQTSPS). The chain crosses the membrane as a helical span at residues 837-857 (WRELLLYVWLTSLVCEEIRQL). Positions 853 and 856 each coordinate Ca(2+). Over 858-876 (YHDFDGSGFRRKAKMYIKD) the chain is Cytoplasmic. The chain crosses the membrane as a helical span at residues 877 to 897 (LWNILDVLSIVLFIAGLICRL). Residue N879 participates in Ca(2+) binding. Topologically, residues 898-905 (QASDTVFY) are extracellular. A helical membrane pass occupies residues 906–926 (IGKVILCIDFIIFCLRLMAIF). Residues 927-941 (SISRTLGPKIIIVRR) lie on the Cytoplasmic side of the membrane. The chain crosses the membrane as a helical span at residues 942-968 (MMLDLFFFMFLLSIWVVAYGVAKQGIL). Topologically, residues 969–977 (IENEERLNW) are extracellular. An intramembrane region (pore-forming) is located at residues 978 to 1002 (IIRGAVYEPYITIFGNFPTNIDNTL). Residues 991 to 993 (FGN) carry the Selectivity filter motif. The Extracellular segment spans residues 1003 to 1034 (FDISSCSVNASDPLKPKCPMLNADNTPVFPEW). A disulfide bridge connects residues C1008 and C1020. N1011 is a glycosylation site (N-linked (GlcNAc...) asparagine). A helical membrane pass occupies residues 1035 to 1059 (LTIMMLCVYLLFANILLLNLLIAIF). Residues 1060–1087 (NYTFQEVQDNTDTIWKFQRYELIKEYHS) are Cytoplasmic-facing. Residue E1084 participates in Ca(2+) binding. An intramembrane segment occupies 1088-1105 (RPALPPPFILLSHLILFI). Topologically, residues 1106-1470 (RGVFLRDLPQ…QIAHHHNTYF (365 aa)) are cytoplasmic. The divergent Nudix hydrolase-like domain stretch occupies residues 1157–1470 (HRIHDTAEKV…QIAHHHNTYF (314 aa)). 2 disordered regions span residues 1215 to 1256 (KSKV…LQYP) and 1281 to 1314 (PPVY…GKGA). Over residues 1231-1244 (DDGDSSGQETDDEE) the composition is skewed to acidic residues. The segment covering 1283-1295 (VYNQQDSSESDTS) has biased composition (polar residues). Positions 1398 and 1400 each coordinate ADP-D-ribose.

Belongs to the transient receptor (TC 1.A.4) family. LTrpC subfamily. TRPM2 sub-subfamily. Homotetramer.

The protein localises to the cell membrane. It carries out the reaction Ca(2+)(in) = Ca(2+)(out). The catalysed reaction is Na(+)(in) = Na(+)(out). Its activity is regulated as follows. Activated by intracellular ADP-ribose. Ca(2+) and PI(4,5)P2 are required for channel opening by ADP-ribose. In terms of biological role, nonselective, voltage-independent cation channel that mediates Ca(2+) influx, leading to increased cytoplasmic Ca(2+) levels. Functions as a ligand-gated ion channel, gated by intracellular adenosine diphosphate ribose (ADP-ribose), Ca(2+), warm temperature, and oxidative stress. Binding of ADP-ribose to the cytoplasmic N-terminal region causes a conformation change; the channel is primed but still requires Ca(2+) binding to trigger channel opening. The protein is Transient receptor potential cation channel subfamily M member 2 of Danio rerio (Zebrafish).